The following is a 318-amino-acid chain: NADH-ubiquinone oxidoreductase chain 1 (318 aa).

A run of 8 helical transmembrane segments spans residues 2-22 (FMIN…FLTL), 68-88 (ITMF…MWTP), 100-120 (LGVL…LWSG), 146-166 (LAII…PALI), 171-191 (HMWL…STLA), 222-242 (LFFL…TILF), 253-273 (ELYT…FLWV), and 294-314 (LPLT…TAGI).

The protein belongs to the complex I subunit 1 family.

The protein localises to the mitochondrion inner membrane. It catalyses the reaction a ubiquinone + NADH + 5 H(+)(in) = a ubiquinol + NAD(+) + 4 H(+)(out). Its function is as follows. Core subunit of the mitochondrial membrane respiratory chain NADH dehydrogenase (Complex I) that is believed to belong to the minimal assembly required for catalysis. Complex I functions in the transfer of electrons from NADH to the respiratory chain. The immediate electron acceptor for the enzyme is believed to be ubiquinone. The chain is NADH-ubiquinone oxidoreductase chain 1 (MT-ND1) from Coelops frithii (East Asian tailless leaf-nosed bat).